A 151-amino-acid chain; its full sequence is UPF0208 membrane protein NT01EI_2692 (151 aa).

2 consecutive transmembrane segments (helical) span residues Phe-46 to Leu-65 and Leu-69 to Gly-91.

Belongs to the UPF0208 family.

Its subcellular location is the cell inner membrane. The protein is UPF0208 membrane protein NT01EI_2692 of Edwardsiella ictaluri (strain 93-146).